A 250-amino-acid polypeptide reads, in one-letter code: MGQKSNPNGLRLGIIRTWESKWYDVDKKVPFLVGEDFKIRTLIKNNYPKSTISQIEIKRLKKSNDEFIEIDLYTSKIGIIQGPENKNKNSLINKIEKLINKKVQINIFEVKAINKIAVLVAQNIAIQLQQRAFYKAVLKSAIQKALKSGIKGIKIIITGRLGGAEKARRDSISMGVVPLNTLRADIDYAFEEAHTTYGVLGVKVIINHGEVLPNKTIADTRQIFSSQYENKKNNNKRHFVDKKNFKKSTS.

The KH type-2 domain maps to 39 to 111 (IRTLIKNNYP…KVQINIFEVK (73 aa)).

The protein belongs to the universal ribosomal protein uS3 family. In terms of assembly, part of the 30S ribosomal subunit. Forms a tight complex with proteins S10 and S14.

In terms of biological role, binds the lower part of the 30S subunit head. Binds mRNA in the 70S ribosome, positioning it for translation. The polypeptide is Small ribosomal subunit protein uS3 (Alder yellows phytoplasma).